We begin with the raw amino-acid sequence, 370 residues long: 4-hydroxy-3-methylbut-2-en-1-yl diphosphate synthase (flavodoxin) (370 aa).

[4Fe-4S] cluster is bound by residues Cys-268, Cys-271, Cys-303, and Glu-310.

Belongs to the IspG family. [4Fe-4S] cluster serves as cofactor.

The enzyme catalyses (2E)-4-hydroxy-3-methylbut-2-enyl diphosphate + oxidized [flavodoxin] + H2O + 2 H(+) = 2-C-methyl-D-erythritol 2,4-cyclic diphosphate + reduced [flavodoxin]. Its pathway is isoprenoid biosynthesis; isopentenyl diphosphate biosynthesis via DXP pathway; isopentenyl diphosphate from 1-deoxy-D-xylulose 5-phosphate: step 5/6. Converts 2C-methyl-D-erythritol 2,4-cyclodiphosphate (ME-2,4cPP) into 1-hydroxy-2-methyl-2-(E)-butenyl 4-diphosphate. The chain is 4-hydroxy-3-methylbut-2-en-1-yl diphosphate synthase (flavodoxin) from Bacillus cereus (strain B4264).